Here is a 721-residue protein sequence, read N- to C-terminus: Penicillin-binding protein activator LpoA (721 aa).

An N-terminal signal peptide occupies residues Met1–Gly26. Cys27 carries the N-palmitoyl cysteine lipid modification. Cys27 is lipidated: S-diacylglycerol cysteine. A compositionally biased stretch (polar residues) spans Thr316 to Met330. Residues Thr316 to Ala393 are disordered. Residues Gln331 to Ala393 are compositionally biased toward low complexity.

The protein belongs to the LpoA family. As to quaternary structure, interacts with PBP1a.

The protein resides in the cell outer membrane. Functionally, regulator of peptidoglycan synthesis that is essential for the function of penicillin-binding protein 1A (PBP1a). The polypeptide is Penicillin-binding protein activator LpoA (Enterobacter sp. (strain 638)).